The sequence spans 229 residues: Cytidylate kinase (229 aa).

ATP is bound at residue 12–20 (GPSGTGKSS).

The protein belongs to the cytidylate kinase family. Type 1 subfamily.

Its subcellular location is the cytoplasm. The enzyme catalyses CMP + ATP = CDP + ADP. The catalysed reaction is dCMP + ATP = dCDP + ADP. The polypeptide is Cytidylate kinase (Rhodococcus opacus (strain B4)).